A 210-amino-acid polypeptide reads, in one-letter code: Thymidylate kinase (210 aa).

10–17 (GPEGAGKS) is a binding site for ATP.

This sequence belongs to the thymidylate kinase family.

It catalyses the reaction dTMP + ATP = dTDP + ADP. In terms of biological role, phosphorylation of dTMP to form dTDP in both de novo and salvage pathways of dTTP synthesis. This Pseudomonas fluorescens (strain Pf0-1) protein is Thymidylate kinase.